The chain runs to 234 residues: tRNA (guanine-N(1)-)-methyltransferase (234 aa).

S-adenosyl-L-methionine contacts are provided by residues glycine 115 and 135–140; that span reads VGDYIL.

It belongs to the RNA methyltransferase TrmD family. As to quaternary structure, homodimer.

It localises to the cytoplasm. It catalyses the reaction guanosine(37) in tRNA + S-adenosyl-L-methionine = N(1)-methylguanosine(37) in tRNA + S-adenosyl-L-homocysteine + H(+). Specifically methylates guanosine-37 in various tRNAs. This Rickettsia africae (strain ESF-5) protein is tRNA (guanine-N(1)-)-methyltransferase.